The primary structure comprises 75 residues: MATVVRLTRIGRKKSPFYRIVVTDSRKRRDSGFIETIGYYNPRMEEELKFDADRLAYWKKVGAKVSDRVAKITSK.

The protein belongs to the bacterial ribosomal protein bS16 family.

In Campylobacter hominis (strain ATCC BAA-381 / DSM 21671 / CCUG 45161 / LMG 19568 / NCTC 13146 / CH001A), this protein is Small ribosomal subunit protein bS16.